A 321-amino-acid chain; its full sequence is uncharacterized protein (321 aa).

Val-2 carries the N-acetylvaline modification. Residues 37 to 63 (SEASRLLTPQTSSNHALSKMQKDDDIR) form a disordered region. The span at 43-52 (LTPQTSSNHA) shows a compositional bias: polar residues. Thr-44 is subject to Phosphothreonine. Phosphoserine is present on residues Ser-49, Ser-69, Ser-121, Ser-126, Ser-129, Ser-137, and Ser-139. 2 disordered regions span residues 115-270 (KKQR…YSIS) and 283-321 (ETLEEEQEDAEKEGVLMEDEGNEEYTKDLEEAANKAQPQ). Composition is skewed to polar residues over residues 120–145 (KSINSESFSSPSLRASKSNSLITSTD), 153–162 (KYSSSGTPEN), and 178–189 (SYGQMIKNNSNR). Position 159 is a phosphothreonine (Thr-159). The span at 204 to 229 (EIDHTAPEKSEKRQERSGRSFDRQKS) shows a compositional bias: basic and acidic residues. Over residues 237–253 (LSRSISRGPTKNKTVSP) the composition is skewed to polar residues. Phosphoserine occurs at positions 238, 240, 242, and 270. Positions 284-305 (TLEEEQEDAEKEGVLMEDEGNE) are enriched in acidic residues. A compositionally biased stretch (basic and acidic residues) spans 306–315 (EYTKDLEEAA).

Its subcellular location is the cytoplasm. This is an uncharacterized protein from Saccharomyces cerevisiae (strain ATCC 204508 / S288c) (Baker's yeast).